A 431-amino-acid polypeptide reads, in one-letter code: Nocturnin (431 aa).

The transit peptide at 1 to 75 (MFHSPRRLCS…SMGTGTSRLY (75 aa)) directs the protein to the mitochondrion. The segment covering 20–31 (LRRLPAPGLRRP) has biased composition (low complexity). The tract at residues 20–41 (LRRLPAPGLRRPLSPPAAVPRP) is disordered. A compositionally biased stretch (pro residues) spans 32–41 (LSPPAAVPRP). E195 is a binding site for Mg(2+). Residues E195, 219 to 221 (KPW), N263, 286 to 289 (HLKA), and 324 to 326 (DFN) contribute to the substrate site. Residues 343–353 (NLNSAYKLLSA) are interaction with PPARG. H414 provides a ligand contact to substrate.

Belongs to the CCR4/nocturin family. As to quaternary structure, interacts with PPARG. It depends on Mg(2+) as a cofactor. As to expression, adipose tissue. Expression is higher in subcutaneous adipose tissue as compared to visceral adipose tissue.

The protein localises to the cytoplasm. The protein resides in the nucleus. It localises to the perinuclear region. Its subcellular location is the mitochondrion. The catalysed reaction is NADP(+) + H2O = phosphate + NAD(+). It carries out the reaction NADPH + H2O = phosphate + NADH. Its function is as follows. Phosphatase which catalyzes the conversion of NADP(+) to NAD(+) and of NADPH to NADH. Shows a small preference for NADPH over NADP(+). Represses translation and promotes degradation of target mRNA molecules. Plays an important role in post-transcriptional regulation of metabolic genes under circadian control. Exerts a rhythmic post-transcriptional control of genes necessary for metabolic functions including nutrient absorption, glucose/insulin sensitivity, lipid metabolism, adipogenesis, inflammation and osteogenesis. Plays an important role in favoring adipogenesis over osteoblastogenesis and acts as a key regulator of the adipogenesis/osteogenesis balance. Promotes adipogenesis by facilitating PPARG nuclear translocation which activates its transcriptional activity. Regulates circadian expression of NOS2 in the liver and negatively regulates the circadian expression of IGF1 in the bone. Critical for proper development of early embryos. In Homo sapiens (Human), this protein is Nocturnin.